The chain runs to 579 residues: Isocitrate dehydrogenase kinase/phosphatase (579 aa).

Residues 324 to 330 (ADGTPGM) and K345 contribute to the ATP site. D380 is a catalytic residue.

It belongs to the AceK family.

It is found in the cytoplasm. It carries out the reaction L-seryl-[isocitrate dehydrogenase] + ATP = O-phospho-L-seryl-[isocitrate dehydrogenase] + ADP + H(+). Functionally, bifunctional enzyme which can phosphorylate or dephosphorylate isocitrate dehydrogenase (IDH) on a specific serine residue. This is a regulatory mechanism which enables bacteria to bypass the Krebs cycle via the glyoxylate shunt in response to the source of carbon. When bacteria are grown on glucose, IDH is fully active and unphosphorylated, but when grown on acetate or ethanol, the activity of IDH declines drastically concomitant with its phosphorylation. The polypeptide is Isocitrate dehydrogenase kinase/phosphatase (Xanthomonas campestris pv. campestris (strain 8004)).